A 220-amino-acid polypeptide reads, in one-letter code: MGFQIAIDGPAASGKSTIAKLLAERLGFEHLNTGATYRAVAVYLKEKGLNPSSPREELEKALKDVKVDYRDGRVFINGKDYTEKIQSPEAGILASDFAKLDLVREHLVRIQREICDDKNIVVEGRDIGTVVLPDAQLKIFLTASLEARIERKLREYQKKGLNVSREEVERELISRDTQDSSRKIAPLKPAEDAVVIDTTSMSVNEVLQKILKLVEERMKA.

9–17 is an ATP binding site; it reads GPAASGKST.

This sequence belongs to the cytidylate kinase family. Type 1 subfamily.

The protein localises to the cytoplasm. It catalyses the reaction CMP + ATP = CDP + ADP. The enzyme catalyses dCMP + ATP = dCDP + ADP. This is Cytidylate kinase from Thermotoga neapolitana (strain ATCC 49049 / DSM 4359 / NBRC 107923 / NS-E).